Consider the following 931-residue polypeptide: Short transient receptor potential channel 6 (931 aa).

The tract at residues 1–24 (MNQSPAAFGPRRGGSPAVVAGAGA) is disordered. Topologically, residues 1–406 (MNQSPAAFGP…GLRQQTMAVK (406 aa)) are cytoplasmic. Residues 13-24 (GGSPAVVAGAGA) show a composition bias toward low complexity. ANK repeat units follow at residues 131–160 (MGQN…LSRV), 162–188 (DALL…FAEG), and 217–246 (HDVT…RIER). The helical transmembrane segment at 407–427 (FLVVLAVAVGLPFLALVYWFA) threads the bilayer. Topologically, residues 428 to 438 (PCSKMGKIMRG) are extracellular. A helical transmembrane segment spans residues 439–459 (PFMKFVAHAASFTIFLGLLVM). Residues 460-487 (NAADRFEGTKILPNETSTDHAKQLFRMK) are Cytoplasmic-facing. A helical transmembrane segment spans residues 488 to 508 (TSCFSWMEMLIISWVIGMIWA). At 509–521 (ECKEIWTQGPKEY) the chain is on the extracellular side. Residues 522–542 (LFELWNMLDFGMLAIFAASFI) form a helical membrane-spanning segment. Residues 543 to 592 (ARFMAFWHASKAQSIIDANDTLKDLTKVTLGDNVKYYNLARIKWDPSDPQ) are Cytoplasmic-facing. The chain crosses the membrane as a helical span at residues 593-613 (IISEGLYAIAVVLSFSRIAYI). Topologically, residues 614–636 (LPANESFGPLQISLGRTVKDIFK) are extracellular. N-linked (GlcNAc...) asparagine glycosylation is present at asparagine 617. The ANK 4 repeat unit spans residues 618 to 647 (ESFGPLQISLGRTVKDIFKFMVIFIMVFVA). The chain crosses the membrane as a helical span at residues 637–657 (FMVIFIMVFVAFMIGMFNLYS). At 658–674 (YYIGAKQNEAFTTVEES) the chain is on the cytoplasmic side. Residues 675 to 695 (FKTLFWAIFGLSEVKSVVINY) form a helical membrane-spanning segment. Topologically, residues 696–706 (NHKFIENIGYV) are extracellular. The helical transmembrane segment at 707 to 727 (LYGVYNVTMVIVLLNMLIAMI) threads the bilayer. Over 728-931 (NSSFQEIEDD…MEPNQEESNR (204 aa)) the chain is Cytoplasmic. The residue at position 815 (serine 815) is a Phosphoserine.

Belongs to the transient receptor (TC 1.A.4) family. STrpC subfamily. TRPC6 sub-subfamily. Homodimer; forms channel complex. Interacts with MX1 and RNF24. Post-translationally, phosphorylated by FYN, leading to an increase of TRPC6 channel activity.

It is found in the cell membrane. The enzyme catalyses Ca(2+)(in) = Ca(2+)(out). Functionally, thought to form a receptor-activated non-selective calcium permeant cation channel. Probably is operated by a phosphatidylinositol second messenger system activated by receptor tyrosine kinases or G-protein coupled receptors. Activated by diacylglycerol (DAG) in a membrane-delimited fashion, independently of protein kinase C. Seems not to be activated by intracellular calcium store depletion. In Bos taurus (Bovine), this protein is Short transient receptor potential channel 6.